A 308-amino-acid polypeptide reads, in one-letter code: Microtubule integrity protein mal3 (308 aa).

The 102-residue stretch at 2–103 (SESRQELLAW…FVQWAKRFWD (102 aa)) folds into the Calponin-homology (CH) domain. Residues 117 to 162 (RGNRGPANTRVMNSSAGATGPSRRRQVSSGSSTPSMTKSSANNNNV) are disordered. Residues 144–162 (SSGSSTPSMTKSSANNNNV) show a composition bias toward low complexity. Residues 173–247 (RAKQAQQQIT…LYSTEDGFEL (75 aa)) form the EB1 C-terminal domain.

It belongs to the MAPRE family. As to quaternary structure, interacts with tea2.

It is found in the cytoplasm. The protein resides in the cytoskeleton. Its function is as follows. May play a role in regulating the integrity of microtubules possibly by influencing their stability. Involved in an anchoring mechanism to maintain tea2 and tip1 at growing microtubule ends. Strongly stimulates the ATPase activity of tea2. In Schizosaccharomyces pombe (strain 972 / ATCC 24843) (Fission yeast), this protein is Microtubule integrity protein mal3 (mal3).